We begin with the raw amino-acid sequence, 100 residues long: MISLNHYLLLCVILFCIGLFGILRRSNILMLFFSTEILLNAINIGFVAIGSYLNDLNGEIFALFIIAIAASEIAVGLGLVVIWYKKHRTLDITTLQNLKG.

3 helical membrane passes run 2–22, 28–48, and 63–83; these read ISLN…LFGI, ILML…GFVA, and LFII…VVIW.

It belongs to the complex I subunit 4L family. In terms of assembly, NDH-1 is composed of 14 different subunits. Subunits NuoA, H, J, K, L, M, N constitute the membrane sector of the complex.

The protein localises to the cell inner membrane. The catalysed reaction is a quinone + NADH + 5 H(+)(in) = a quinol + NAD(+) + 4 H(+)(out). NDH-1 shuttles electrons from NADH, via FMN and iron-sulfur (Fe-S) centers, to quinones in the respiratory chain. The immediate electron acceptor for the enzyme in this species is believed to be ubiquinone. Couples the redox reaction to proton translocation (for every two electrons transferred, four hydrogen ions are translocated across the cytoplasmic membrane), and thus conserves the redox energy in a proton gradient. In Helicobacter hepaticus (strain ATCC 51449 / 3B1), this protein is NADH-quinone oxidoreductase subunit K.